Reading from the N-terminus, the 201-residue chain is Orotate phosphoribosyltransferase (201 aa).

5-phospho-alpha-D-ribose 1-diphosphate is bound at residue Glu113–Ser121. Orotate contacts are provided by Thr117 and Arg145.

The protein belongs to the purine/pyrimidine phosphoribosyltransferase family. PyrE subfamily. Homodimer. Requires Mg(2+) as cofactor.

It carries out the reaction orotidine 5'-phosphate + diphosphate = orotate + 5-phospho-alpha-D-ribose 1-diphosphate. It participates in pyrimidine metabolism; UMP biosynthesis via de novo pathway; UMP from orotate: step 1/2. Its function is as follows. Catalyzes the transfer of a ribosyl phosphate group from 5-phosphoribose 1-diphosphate to orotate, leading to the formation of orotidine monophosphate (OMP). This chain is Orotate phosphoribosyltransferase, found in Helicobacter pylori (strain ATCC 700392 / 26695) (Campylobacter pylori).